Consider the following 437-residue polypeptide: Gamma-glutamyl phosphate reductase (437 aa).

Belongs to the gamma-glutamyl phosphate reductase family.

The protein resides in the cytoplasm. It catalyses the reaction L-glutamate 5-semialdehyde + phosphate + NADP(+) = L-glutamyl 5-phosphate + NADPH + H(+). It functions in the pathway amino-acid biosynthesis; L-proline biosynthesis; L-glutamate 5-semialdehyde from L-glutamate: step 2/2. Its function is as follows. Catalyzes the NADPH-dependent reduction of L-glutamate 5-phosphate into L-glutamate 5-semialdehyde and phosphate. The product spontaneously undergoes cyclization to form 1-pyrroline-5-carboxylate. The chain is Gamma-glutamyl phosphate reductase from Synechococcus sp. (strain CC9902).